The chain runs to 234 residues: HTH-type transcriptional regulator ArcR (234 aa).

40 to 129 (VRHYTKGQVI…MAFLCKANDD (90 aa)) contacts a nucleoside 3',5'-cyclic phosphate. In terms of domain architecture, HTH crp-type spans 155–228 (KFAKDRIIKL…HKNWLVSKHL (74 aa)). The segment at residues 188 to 207 (IQLMSDMAGISRETAGHIIH) is a DNA-binding region (H-T-H motif).

Its subcellular location is the cytoplasm. Functionally, positively regulates the expression of the arcABDCR operon under anaerobic conditions, thus playing an essential role in arginine catabolism. May also control the expression of genes encoding proteins which are involved in anaerobic metabolism. Can bind cyclic AMP. The sequence is that of HTH-type transcriptional regulator ArcR (arcR) from Staphylococcus aureus (strain MSSA476).